A 231-amino-acid chain; its full sequence is Small ribosomal subunit protein uS2c (231 aa).

The protein belongs to the universal ribosomal protein uS2 family.

It localises to the plastid. The protein resides in the chloroplast. The chain is Small ribosomal subunit protein uS2c (rps2) from Gracilaria tenuistipitata var. liui (Red alga).